The following is a 580-amino-acid chain: MGGGGTLVDGFRRLFHRRTASGSNQSSNAGEEAASSDLEVADDPDLVALRSIRIRVPKRKMPLPVESHKKNTVEMEFFTEYGEASQYQIQEVIGKGSYGVVAAAVDTRTGERVAIKKINDVFEHVSDATRILREIKLLRLLRHPDIVEIKHIMLPPSRREFQDIYVVFELMESDLHQVIRANDDLTPEHYQFFLYQLLRALKYIHAANVFHRDLKPKNILANSDCKLKICDFGLARASFNDAPSAIFWTDYVATRWYRAPELCGSFFSKYTPAIDIWSIGCIFAELLTGRPLFPGKNVVHQLDIITDLLGTPSSETLSRIRNEKARRYLSTMRKKHAVPFSQKFRNTDPLALRLLERLLAFDPKDRSSAEEALADPYFASLANVEREPSRHPISKLEFEFERRKLTKDDVRELIYREILEYHPQMLQEYMKGGEQISFLYPSGVDRFKRQFAHLEENYSKGERGSPLQRKHASLPRERVGVSKDGYNQQNTNDQERSADSVARTTVSPPMSQDAQQHGSAGQNGVTSTDLSSRSYLKSASISASKCVAVKDNKEPEDDYISEEMEGSVDGLSEQVSRMHS.

A disordered region spans residues 18–38; sequence RTASGSNQSSNAGEEAASSDL. Residues 20 to 29 are compositionally biased toward polar residues; sequence ASGSNQSSNA. Residues 87–378 enclose the Protein kinase domain; it reads YQIQEVIGKG…AEEALADPYF (292 aa). Residues 93 to 101 and lysine 116 contribute to the ATP site; that span reads IGKGSYGVV. The active-site Proton acceptor is the aspartate 213. Phosphothreonine is present on threonine 249. The TXY motif lies at 249-251; it reads TDY. A Phosphotyrosine modification is found at tyrosine 251. The interval 325 to 506 is required for kinase activity and nuclear localization; that stretch reads ARRYLSTMRK…SADSVARTTV (182 aa). Positions 458-580 are disordered; sequence YSKGERGSPL…LSEQVSRMHS (123 aa). Residues 502–543 show a composition bias toward polar residues; the sequence is ARTTVSPPMSQDAQQHGSAGQNGVTSTDLSSRSYLKSASISA. Residues 554–566 are compositionally biased toward acidic residues; the sequence is EPEDDYISEEMEG.

Belongs to the protein kinase superfamily. CMGC Ser/Thr protein kinase family. MAP kinase subfamily. In terms of assembly, interacts with EREBP1. In terms of processing, dually phosphorylated on Thr-249 and Tyr-251, which activates the enzyme. Phosphorylated on tyrosine residue.

It localises to the cytoplasm. The protein localises to the nucleus. It catalyses the reaction L-seryl-[protein] + ATP = O-phospho-L-seryl-[protein] + ADP + H(+). The catalysed reaction is L-threonyl-[protein] + ATP = O-phospho-L-threonyl-[protein] + ADP + H(+). Its activity is regulated as follows. Activated by threonine and tyrosine phosphorylation. Activated in response to hydrogen peroxide, salicylic acid, jasmonic acid, ethylene, fungal elicitor and infection with rice blast fungus (M.grisea). Its function is as follows. May be involved in defense signaling pathway. Phosphorylates EREBP1 transcriptional activator in vitro. Enhances DNA-binding activity of EREBP1 to the GCC box element of pathogenesis-related (PR) gene promoters. The protein is Mitogen-activated protein kinase 12 (MPK12) of Oryza sativa subsp. japonica (Rice).